The primary structure comprises 424 residues: Anaerobic glycerol-3-phosphate dehydrogenase subunit B (424 aa).

It belongs to the anaerobic G-3-P dehydrogenase subunit B family. Composed of a catalytic GlpA/B dimer and of membrane bound GlpC. It depends on FMN as a cofactor.

The catalysed reaction is a quinone + sn-glycerol 3-phosphate = dihydroxyacetone phosphate + a quinol. It participates in polyol metabolism; glycerol degradation via glycerol kinase pathway; glycerone phosphate from sn-glycerol 3-phosphate (anaerobic route): step 1/1. In terms of biological role, conversion of glycerol 3-phosphate to dihydroxyacetone. Uses fumarate or nitrate as electron acceptor. The polypeptide is Anaerobic glycerol-3-phosphate dehydrogenase subunit B (Yersinia pseudotuberculosis serotype I (strain IP32953)).